The sequence spans 324 residues: Adducin-related protein C1289.14 (324 aa).

The protein belongs to the aldolase class II family. Adducin subfamily.

The protein is Adducin-related protein C1289.14 of Schizosaccharomyces pombe (strain 972 / ATCC 24843) (Fission yeast).